A 470-amino-acid chain; its full sequence is Glycolate oxidase subunit GlcD (470 aa).

The FAD-binding PCMH-type domain occupies 37–216; sequence YQSMPDAVIA…TEAIVKLVPK (180 aa).

It belongs to the FAD-binding oxidoreductase/transferase type 4 family. As to quaternary structure, the glycolate oxidase likely consists of several subunits including GlcD and GlcF. The cofactor is FAD.

The protein resides in the cell membrane. The enzyme catalyses glycolate + A = glyoxylate + AH2. It catalyses the reaction (R)-lactate + A = pyruvate + AH2. In terms of biological role, component of a complex that catalyzes the oxidation of glycolate to glyoxylate. Is also able to oxidize D-lactate ((R)-lactate). Does not link directly to O(2), and 2,6-dichloroindophenol (DCIP) and phenazine methosulfate (PMS) can act as artificial electron acceptors in vitro, but the physiological molecule that functions as primary electron acceptor during glycolate oxidation is unknown. The sequence is that of Glycolate oxidase subunit GlcD (glcD) from Bacillus subtilis (strain 168).